Consider the following 296-residue polypeptide: MLADSSQPSSFHHVTVLQRELVEGLLPDRGGWFLDATLGGGGHSELLLSEWPNTQVIGLDRDPAAIAASQTRLQLYSDRVQFQHVNFANYQPGDRRFQGIMADLGVSSPQLDEAERGFSFRQDAPLDMRMDPTAELTAAAIVNEWDETDLANLIYQYGEERLSRRIARRIVEQRPFERTLELSEAIAGAVPRSYRYGRIHPATRTFQALRIAVNGELDALQTFLDRAPDWLAPGGRIALISFHSLEDRIIKHALRGDDRLTVITRKPLLPSEAEIESNPRSRSAKLRIAERVLPES.

S-adenosyl-L-methionine is bound by residues 41 to 43, D60, F87, D103, and Q110; that span reads GGH.

It belongs to the methyltransferase superfamily. RsmH family.

The protein localises to the cytoplasm. It catalyses the reaction cytidine(1402) in 16S rRNA + S-adenosyl-L-methionine = N(4)-methylcytidine(1402) in 16S rRNA + S-adenosyl-L-homocysteine + H(+). Specifically methylates the N4 position of cytidine in position 1402 (C1402) of 16S rRNA. In Synechococcus elongatus (strain ATCC 33912 / PCC 7942 / FACHB-805) (Anacystis nidulans R2), this protein is Ribosomal RNA small subunit methyltransferase H.